The sequence spans 298 residues: Bifunctional protein FolD (298 aa).

Residues 167–169, serine 192, and valine 233 each bind NADP(+); that span reads GRS.

The protein belongs to the tetrahydrofolate dehydrogenase/cyclohydrolase family. As to quaternary structure, homodimer.

It catalyses the reaction (6R)-5,10-methylene-5,6,7,8-tetrahydrofolate + NADP(+) = (6R)-5,10-methenyltetrahydrofolate + NADPH. The catalysed reaction is (6R)-5,10-methenyltetrahydrofolate + H2O = (6R)-10-formyltetrahydrofolate + H(+). It functions in the pathway one-carbon metabolism; tetrahydrofolate interconversion. In terms of biological role, catalyzes the oxidation of 5,10-methylenetetrahydrofolate to 5,10-methenyltetrahydrofolate and then the hydrolysis of 5,10-methenyltetrahydrofolate to 10-formyltetrahydrofolate. The polypeptide is Bifunctional protein FolD (Chelativorans sp. (strain BNC1)).